The following is a 508-amino-acid chain: Photosystem II CP47 reaction center protein (508 aa).

6 consecutive transmembrane segments (helical) span residues 21 to 36 (SVHIMHTALVAGWAGS), 101 to 115 (IVFSGLCFLAAIWHW), 140 to 156 (GIHLFLSGVACFGFGAF), 203 to 218 (IAAGTLGILAGLFHLS), 237 to 252 (VLSSSIAAVFFAAFVV), and 457 to 472 (SFALLFFFGHIWHGSR).

Belongs to the PsbB/PsbC family. PsbB subfamily. As to quaternary structure, PSII is composed of 1 copy each of membrane proteins PsbA, PsbB, PsbC, PsbD, PsbE, PsbF, PsbH, PsbI, PsbJ, PsbK, PsbL, PsbM, PsbT, PsbX, PsbY, PsbZ, Psb30/Ycf12, at least 3 peripheral proteins of the oxygen-evolving complex and a large number of cofactors. It forms dimeric complexes. It depends on Binds multiple chlorophylls. PSII binds additional chlorophylls, carotenoids and specific lipids. as a cofactor.

The protein resides in the plastid. Its subcellular location is the chloroplast thylakoid membrane. In terms of biological role, one of the components of the core complex of photosystem II (PSII). It binds chlorophyll and helps catalyze the primary light-induced photochemical processes of PSII. PSII is a light-driven water:plastoquinone oxidoreductase, using light energy to abstract electrons from H(2)O, generating O(2) and a proton gradient subsequently used for ATP formation. This is Photosystem II CP47 reaction center protein from Draba nemorosa (Woodland whitlowgrass).